We begin with the raw amino-acid sequence, 369 residues long: Glutamate 5-kinase (369 aa).

Lys9 serves as a coordination point for ATP. Substrate contacts are provided by Ser49, Asp136, and Asn148. ATP-binding positions include 168 to 169 (TD) and 210 to 216 (TGGMLTK). The PUA domain maps to 275 to 355 (QGSIWVDKGA…KGVLIYRDDW (81 aa)).

Belongs to the glutamate 5-kinase family.

Its subcellular location is the cytoplasm. It catalyses the reaction L-glutamate + ATP = L-glutamyl 5-phosphate + ADP. It functions in the pathway amino-acid biosynthesis; L-proline biosynthesis; L-glutamate 5-semialdehyde from L-glutamate: step 1/2. In terms of biological role, catalyzes the transfer of a phosphate group to glutamate to form L-glutamate 5-phosphate. The chain is Glutamate 5-kinase from Streptococcus pneumoniae (strain 70585).